We begin with the raw amino-acid sequence, 262 residues long: Type III pantothenate kinase (262 aa).

9–16 (DSGNTRVK) lines the ATP pocket. Substrate-binding positions include tyrosine 93 and 100 to 103 (GSDR). Aspartate 102 (proton acceptor) is an active-site residue. Residue aspartate 122 coordinates K(+). Residue threonine 125 coordinates ATP. Threonine 175 provides a ligand contact to substrate.

The protein belongs to the type III pantothenate kinase family. In terms of assembly, homodimer. Requires NH4(+) as cofactor. The cofactor is K(+).

It localises to the cytoplasm. The catalysed reaction is (R)-pantothenate + ATP = (R)-4'-phosphopantothenate + ADP + H(+). Its pathway is cofactor biosynthesis; coenzyme A biosynthesis; CoA from (R)-pantothenate: step 1/5. Functionally, catalyzes the phosphorylation of pantothenate (Pan), the first step in CoA biosynthesis. The protein is Type III pantothenate kinase of Nitrosospira multiformis (strain ATCC 25196 / NCIMB 11849 / C 71).